The primary structure comprises 400 residues: Exodeoxyribonuclease 7 large subunit (400 aa).

The protein belongs to the XseA family. As to quaternary structure, heterooligomer composed of large and small subunits.

It is found in the cytoplasm. The catalysed reaction is Exonucleolytic cleavage in either 5'- to 3'- or 3'- to 5'-direction to yield nucleoside 5'-phosphates.. Bidirectionally degrades single-stranded DNA into large acid-insoluble oligonucleotides, which are then degraded further into small acid-soluble oligonucleotides. The chain is Exodeoxyribonuclease 7 large subunit from Clostridium kluyveri (strain NBRC 12016).